Reading from the N-terminus, the 57-residue chain is Potassium channel toxin alpha-KTx 17.2 (57 aa).

An N-terminal signal peptide occupies residues 1–26; sequence MKTIIVLLLLTIVAAAVVESSPKARR. 3 cysteine pairs are disulfide-bonded: Cys30–Cys46, Cys36–Cys51, and Cys40–Cys53.

Belongs to the short scorpion toxin superfamily. Potassium channel inhibitor family. Alpha-KTx 17 subfamily. As to expression, expressed by the venom gland.

It is found in the secreted. Inhibits voltage-gated potassium channels. The polypeptide is Potassium channel toxin alpha-KTx 17.2 (Lychas mucronatus (Chinese swimming scorpion)).